Here is a 163-residue protein sequence, read N- to C-terminus: Urease accessory protein UreE (163 aa).

The interval 144-163 (QPEPGAYGGSSAGSHDGHHH) is disordered.

The protein belongs to the UreE family.

It is found in the cytoplasm. Its function is as follows. Involved in urease metallocenter assembly. Binds nickel. Probably functions as a nickel donor during metallocenter assembly. The sequence is that of Urease accessory protein UreE from Aliivibrio fischeri (strain ATCC 700601 / ES114) (Vibrio fischeri).